A 478-amino-acid chain; its full sequence is Cytochrome c-552 (478 aa).

Positions 1-26 (MARKTLRARRFFSLIFPFFFITSVYA) are cleaved as a signal peptide. His94 is a heme c binding site. 3 residues coordinate heme: Cys122, Cys125, and Lys126. The heme c site is built by Cys160, Cys163, His164, Cys209, Cys212, and His213. Positions 215, 216, 261, and 263 each coordinate Ca(2+). Tyr216 contributes to the substrate binding site. Residue His264 participates in substrate binding. Positions 275, 282, 285, 286, 301, 314, 317, 318, and 393 each coordinate heme c.

This sequence belongs to the cytochrome c-552 family. It depends on Ca(2+) as a cofactor. The cofactor is heme c.

It localises to the periplasm. The enzyme catalyses 6 Fe(III)-[cytochrome c] + NH4(+) + 2 H2O = 6 Fe(II)-[cytochrome c] + nitrite + 8 H(+). It participates in nitrogen metabolism; nitrate reduction (assimilation). In terms of biological role, catalyzes the reduction of nitrite to ammonia, consuming six electrons in the process. This chain is Cytochrome c-552, found in Salmonella paratyphi C (strain RKS4594).